Consider the following 415-residue polypeptide: Corticotropin-releasing factor receptor 1 (415 aa).

Residues 1 to 23 (MGQRPQLRLVKALLLLGLNPVST) form the signal peptide. Residues 24–111 (SLQDQQCESL…CQEILNEEKK (88 aa)) are Extracellular-facing. Intrachain disulfides connect cysteine 30–cysteine 54, cysteine 44–cysteine 87, and cysteine 68–cysteine 102. Asparagine 38, asparagine 45, asparagine 78, asparagine 90, and asparagine 98 each carry an N-linked (GlcNAc...) asparagine glycan. The segment at 99–108 (YSECQEILNE) is important for peptide agonist binding. A helical membrane pass occupies residues 112–142 (SKVHYHIAVIINYLGHCISLVALLVAFVLFL). The Cytoplasmic segment spans residues 143–149 (RLRSIRC). A helical membrane pass occupies residues 150-174 (LRNIIHWNLISAFILRNATWFVVQL). The Extracellular portion of the chain corresponds to 175 to 189 (TVSPEVHQSNVAWCR). An intrachain disulfide couples cysteine 188 to cysteine 258. The chain crosses the membrane as a helical span at residues 190–218 (LVTAAYNYFHVTNFFWMFGEGCYLHTAIV). At 219 to 225 (LTYSTDR) the chain is on the cytoplasmic side. A helical membrane pass occupies residues 226 to 253 (LRKWMFVCIGWGVPFPIIVAWAIGKLYY). Over 254–269 (DNEKCWFGKRPGVYTD) the chain is Extracellular. The helical transmembrane segment at 270-295 (YIYQGPMILVLLINFIFLFNIVRILM) threads the bilayer. Residues 280 to 290 (LLINFIFLFNI) form an important for antagonist binding region. The Cytoplasmic portion of the chain corresponds to 296 to 306 (TKLRASTTSET). At serine 301 the chain carries Phosphoserine; by PKA. The chain crosses the membrane as a helical span at residues 307–331 (IQYRKAVKATLVLLPLLGITYMLFF). Residues 332–338 (VNPGEDE) lie on the Extracellular side of the membrane. Residues 339–368 (VSRVVFIYFNSFLESFQGFFVSVFYCFLNS) traverse the membrane as a helical segment. Residues 369-415 (EVRSAIRKRWRRWQDKHSIRARVARAMSIPTSPTRVSFHSIKQSTAV) lie on the Cytoplasmic side of the membrane.

It belongs to the G-protein coupled receptor 2 family. Heterodimer; heterodimerizes with GPER1. Interacts (via N-terminal extracellular domain) with CRH and UCN. Interacts with DLG1; this inhibits endocytosis of CRHR1 after agonist binding. In terms of processing, C-terminal Ser or Thr residues may be phosphorylated. Post-translationally, phosphorylation at Ser-301 by PKA prevents maximal coupling to Gq-protein, and thereby negatively regulates downstream signaling. Detected in brain cortex (at protein level).

The protein localises to the cell membrane. The protein resides in the endosome. G-protein coupled receptor for CRH (corticotropin-releasing factor) and UCN (urocortin). Has high affinity for CRH and UCN. Ligand binding causes a conformation change that triggers signaling via guanine nucleotide-binding proteins (G proteins) and down-stream effectors, such as adenylate cyclase. Promotes the activation of adenylate cyclase, leading to increased intracellular cAMP levels. Inhibits the activity of the calcium channel CACNA1H. Required for normal embryonic development of the adrenal gland and for normal hormonal responses to stress. Plays a role in the response to anxiogenic stimuli. The chain is Corticotropin-releasing factor receptor 1 (Crhr1) from Mus musculus (Mouse).